A 386-amino-acid chain; its full sequence is MTIKNNNNNNTLKHLQAFPPLKNDNLLRAARGEVVDRVPVWVMRQAGRYLPEFQELRKQHDFFTVCRTPELACEVTMQPLRRFDLDASIIFSDILVIPQALGLTVEMHAGVGPVLPQPICTPEDLKRLTPDGALSRLTYVGDAITMMRHKLDGRVPLIGFTGAPWTLMGYMIEGGGSKTMSKAKAWLTNYPEDTKLFLILLTDVIVDYLEMQVIAGAQMLQVFESSAEHLSKEEFLLGSEPYLRRIRDDLVDRLTKKVIPAVPLVSSYPNNIFTLLTYLISLLIIFAKGAGHSLKEQSELGYDVIGLDWTVDPVEARAVVGPNITLQGNLDPQSMYCEPNELRSLATEMVHKCGKSRYIANVGHGITPQTPITSMEVLVEAAHNAL.

Residues Arg44, Ala46, Arg48, Arg57, Asp93, Tyr170, Ser225, and His364 each coordinate coproporphyrinogen I. Residues Arg44, Ala46, and Arg48 each contribute to the coproporphyrinogen III site. Positions 93, 170, 225, and 364 each coordinate coproporphyrinogen III.

Belongs to the uroporphyrinogen decarboxylase family. In terms of assembly, homodimer.

It is found in the cytoplasm. It localises to the cytosol. The catalysed reaction is uroporphyrinogen III + 4 H(+) = coproporphyrinogen III + 4 CO2. It participates in porphyrin-containing compound metabolism; protoporphyrin-IX biosynthesis; coproporphyrinogen-III from 5-aminolevulinate: step 4/4. Catalyzes the decarboxylation of four acetate groups of uroporphyrinogen-III to yield coproporphyrinogen-III. The protein is Uroporphyrinogen decarboxylase of Drosophila virilis (Fruit fly).